We begin with the raw amino-acid sequence, 133 residues long: Alcohol dehydrogenase, 15 kDa subunit (133 aa).

The signal sequence occupies residues 1–24 (MFRRIVPVLGLALGLGLASQAAMA). The tract at residues 23–43 (MAQEQSPPPPPAVQGTPGKDF) is disordered. Gln25 is modified (pyrrolidone carboxylic acid).

As to quaternary structure, the alcohol dehydrogenase multicomponent enzyme system is composed of a dehydrogenase subunit I (AdhA), a cytochrome c subunit II (AdhB) and a subunit III (AdhS).

It localises to the cell membrane. In terms of biological role, part of the alcohol dehydrogenase multicomponent enzyme system which is involved in the production of acetic acid and in the ethanol oxidase respiratory chain. Does not play an obligatory role for the alcohol dehydrogenase (ADH) activity. The protein is Alcohol dehydrogenase, 15 kDa subunit of Gluconobacter oxydans (strain 621H) (Gluconobacter suboxydans).